The sequence spans 357 residues: Dehydrogenase FUB6 (357 aa).

This sequence belongs to the zinc-containing alcohol dehydrogenase family. Quinone oxidoreductase subfamily.

It participates in mycotoxin biosynthesis. Its function is as follows. Dehydrogenase; part of the gene cluster that mediates the biosynthesis of fusaric acid, a mycotoxin with low to moderate toxicity to animals and humans, but with high phytotoxic properties. L-aspartate is suggested as fusaric acid amino acid precursor that is activated and further processed to O-acetyl-L-homoserine by cluster enzymes aspartate kinase FUB3 and homoserine O-acetyltransferase FUB5, as well as enzymes of the primary metabolism. The polyketide synthase (PKS) FUB1 generates the triketide trans-2-hexenal which is presumptively released by the hydrolase FUB4 and linked to the NRPS-bound amino acid precursor by NAD(P)-dependent dehydrogenase FUB6. FUB1, FUB4, and the non-canonical NRPS Fub8 may form an enzyme complex. Further processing of the NRPS-bound intermediate might be carried out by FUB6 and the O-acetylhomoserine FUB7, enabling a spontaneous electrocyclization to close the carbon backbone of fusaric acid. Dihydrofusaric acid is likely to be released via reduction by the thioester reductase (TR) domain of FUB8 whereupon the final oxidation to fusaric acid may (also) be performed by the FMN-dependent dehydrogenase FUB9. The polypeptide is Dehydrogenase FUB6 (Gibberella moniliformis (strain M3125 / FGSC 7600) (Maize ear and stalk rot fungus)).